The chain runs to 102 residues: Small ribosomal subunit protein uS10 (102 aa).

Belongs to the universal ribosomal protein uS10 family. As to quaternary structure, part of the 30S ribosomal subunit.

Involved in the binding of tRNA to the ribosomes. This chain is Small ribosomal subunit protein uS10, found in Lactococcus lactis subsp. lactis (strain IL1403) (Streptococcus lactis).